The sequence spans 800 residues: Phenylalanine--tRNA ligase beta subunit (800 aa).

The tRNA-binding domain maps to 39-154; that stretch reads TKDIKNLVVG…EAQVPGTDAL (116 aa). The B5 domain occupies 408–483; the sequence is AFITPIDITA…RIYGYDDIPS (76 aa). Mg(2+) contacts are provided by Asp-461, Asp-467, Glu-470, and Glu-471. Residues 708–800 form the FDX-ACB domain; that stretch reads PRFPGMSRDI…ALIEQGAVIR (93 aa).

This sequence belongs to the phenylalanyl-tRNA synthetase beta subunit family. Type 1 subfamily. Tetramer of two alpha and two beta subunits. Mg(2+) is required as a cofactor.

It is found in the cytoplasm. It catalyses the reaction tRNA(Phe) + L-phenylalanine + ATP = L-phenylalanyl-tRNA(Phe) + AMP + diphosphate + H(+). This chain is Phenylalanine--tRNA ligase beta subunit, found in Staphylococcus aureus (strain USA300).